The sequence spans 881 residues: Putative leucine-rich repeat receptor-like protein kinase At2g19210 (881 aa).

An N-terminal signal peptide occupies residues 1–25 (MVHYNFLSLIIFACFFAVFVLLVRA). Over 26–518 (QDQSGFVSID…SDEKTKKNVY (493 aa)) the chain is Extracellular. 9 N-linked (GlcNAc...) asparagine glycosylation sites follow: N143, N234, N295, N310, N404, N419, N435, N446, and N462. 2 LRR repeats span residues 438-460 (LLHILDLSNNSLTGKIPDFLGNL) and 462-483 (NLTELNLEGNKLSGAIPVKLLE). The chain crosses the membrane as a helical span at residues 519 to 539 (IIPLVASVVGVLGLVLAIALF). The Cytoplasmic portion of the chain corresponds to 540–881 (LLYKKRHRRG…FDSGMFPQAR (342 aa)). The Protein kinase domain occupies 576–850 (NNFERVLGQG…HVVAELKESV (275 aa)). Residues 582 to 590 (LGQGGFGKV) and K603 each bind ATP. Y648 carries the post-translational modification Phosphotyrosine. Residue D699 is the Proton acceptor of the active site. Residues T734 and T739 each carry the phosphothreonine modification. At Y747 the chain carries Phosphotyrosine. The disordered stretch occupies residues 851 to 881 (SRARAGGGSGASSVTDPAMTNFDSGMFPQAR).

It belongs to the protein kinase superfamily. Ser/Thr protein kinase family.

The protein resides in the cell membrane. The catalysed reaction is L-seryl-[protein] + ATP = O-phospho-L-seryl-[protein] + ADP + H(+). It carries out the reaction L-threonyl-[protein] + ATP = O-phospho-L-threonyl-[protein] + ADP + H(+). This is Putative leucine-rich repeat receptor-like protein kinase At2g19210 from Arabidopsis thaliana (Mouse-ear cress).